Consider the following 313-residue polypeptide: Beta-ketoacyl-[acyl-carrier-protein] synthase III (313 aa).

Active-site residues include C112 and H238. Residues 239–243 (QANIR) are ACP-binding. Residue N268 is part of the active site.

It belongs to the thiolase-like superfamily. FabH family. Homodimer.

The protein resides in the cytoplasm. It carries out the reaction malonyl-[ACP] + acetyl-CoA + H(+) = 3-oxobutanoyl-[ACP] + CO2 + CoA. It functions in the pathway lipid metabolism; fatty acid biosynthesis. Its function is as follows. Catalyzes the condensation reaction of fatty acid synthesis by the addition to an acyl acceptor of two carbons from malonyl-ACP. Catalyzes the first condensation reaction which initiates fatty acid synthesis and may therefore play a role in governing the total rate of fatty acid production. Possesses both acetoacetyl-ACP synthase and acetyl transacylase activities. Its substrate specificity determines the biosynthesis of branched-chain and/or straight-chain of fatty acids. This Staphylococcus saprophyticus subsp. saprophyticus (strain ATCC 15305 / DSM 20229 / NCIMB 8711 / NCTC 7292 / S-41) protein is Beta-ketoacyl-[acyl-carrier-protein] synthase III.